We begin with the raw amino-acid sequence, 290 residues long: AA9 family lytic polysaccharide monooxygenase A (290 aa).

The first 17 residues, 1 to 17 (MKLSLLASVALVPFVSA), serve as a signal peptide directing secretion. Cu(2+)-binding residues include H18 and H101. C67 and C189 are oxidised to a cystine. H176 lines the O2 pocket. Residue Y187 participates in Cu(2+) binding. Residues N220 and N254 are each glycosylated (N-linked (GlcNAc...) asparagine). Residues 240–290 (GGSGSGSSSYSKVANVTSSDESSQSGASSSQGTVSTCPNKYNRRHARQFKP) form a disordered region. Residues 245-275 (GSSSYSKVANVTSSDESSQSGASSSQGTVST) are compositionally biased toward low complexity. Positions 280 to 290 (YNRRHARQFKP) are enriched in basic residues.

Belongs to the polysaccharide monooxygenase AA9 family. The cofactor is Cu(2+).

Its subcellular location is the secreted. The catalysed reaction is [(1-&gt;4)-beta-D-glucosyl]n+m + reduced acceptor + O2 = 4-dehydro-beta-D-glucosyl-[(1-&gt;4)-beta-D-glucosyl]n-1 + [(1-&gt;4)-beta-D-glucosyl]m + acceptor + H2O.. Lytic polysaccharide monooxygenase (LPMO) that depolymerizes crystalline and amorphous polysaccharides via the oxidation of scissile alpha- or beta-(1-4)-glycosidic bonds, yielding exclusively C1 oxidation products. Catalysis by LPMOs requires the reduction of the active-site copper from Cu(II) to Cu(I) by a reducing agent and H(2)O(2) or O(2) as a cosubstrate. This is AA9 family lytic polysaccharide monooxygenase A from Aspergillus fumigatus (strain ATCC MYA-4609 / CBS 101355 / FGSC A1100 / Af293) (Neosartorya fumigata).